Reading from the N-terminus, the 499-residue chain is DNA-directed RNA polymerase subunit Rpo2N (499 aa).

It belongs to the RNA polymerase beta chain family. Part of the RNA polymerase complex.

It is found in the cytoplasm. The enzyme catalyses RNA(n) + a ribonucleoside 5'-triphosphate = RNA(n+1) + diphosphate. Functionally, DNA-dependent RNA polymerase (RNAP) catalyzes the transcription of DNA into RNA using the four ribonucleoside triphosphates as substrates. The Rpo2 subunit (Rpo2N and Rpo2C in this organism) is implicated in DNA promoter recognition and in nucleotide binding. The sequence is that of DNA-directed RNA polymerase subunit Rpo2N from Methanococcus vannielii (strain ATCC 35089 / DSM 1224 / JCM 13029 / OCM 148 / SB).